A 314-amino-acid polypeptide reads, in one-letter code: Olfactory receptor 52H1 (314 aa).

Residues 1-32 (MIIFNLSSYNPGPFILVGIPGLEQFHVWIGIP) are Extracellular-facing. N5 is a glycosylation site (N-linked (GlcNAc...) asparagine). The chain crosses the membrane as a helical span at residues 33 to 53 (FCIIYIVAVVGNCILLYLIVV). Over 54-59 (EHSLHE) the chain is Cytoplasmic. The helical transmembrane segment at 60–80 (PMFFFLSMLAMTDLILSTAGV) threads the bilayer. The Extracellular segment spans residues 81 to 101 (PKALSIFWLGAREITFPGCLT). C99 and C181 are oxidised to a cystine. A helical transmembrane segment spans residues 102 to 122 (QMFFLHYNFVLDSAILMAMAF). At 123-149 (DHYVAICSPLRYTTILTPKTIIKSAMG) the chain is on the cytoplasmic side. Residues 150–170 (ISFRSFCIILPDVFLLTCLPF) form a helical membrane-spanning segment. Residues 171 to 197 (CRTRIIPHTYCEHIGVAQLACADISIN) lie on the Extracellular side of the membrane. Residues 198–218 (FWYGFCVPIMTVISDVILIAV) traverse the membrane as a helical segment. Over 219–242 (SYAHILCAVFGLPSQDACQKALGT) the chain is Cytoplasmic. The helical transmembrane segment at 243–263 (CGSHVCVILMFYTPAFFSILA) threads the bilayer. Topologically, residues 264-275 (HRFGHNVSRTFH) are extracellular. The N-linked (GlcNAc...) asparagine glycan is linked to N269. A helical transmembrane segment spans residues 276 to 296 (IMFANLYIVIPPALNPMVYGV). Residues 297–314 (KTKQIRDKVILLFSKGTG) are Cytoplasmic-facing.

The protein belongs to the G-protein coupled receptor 1 family.

The protein resides in the membrane. Functionally, odorant receptor. This is Olfactory receptor 52H1 (OR52H1) from Homo sapiens (Human).